The chain runs to 384 residues: Na(+)/H(+) antiporter NhaA (384 aa).

11 consecutive transmembrane segments (helical) span residues 17 to 37 (SGLF…SAIA), 53 to 73 (LEYW…GLEL), 89 to 109 (MLPI…FLVM), 118 to 138 (GAGI…SLLG), 147 to 167 (IFLT…IAVF), 171 to 191 (TLLW…LILN), 198 to 218 (LIPY…SGVH), 251 to 271 (PVAF…VLSS), 283 to 303 (IGIA…LSML), 321 to 341 (ILAV…ITLL), and 354 to 374 (FVIL…LKYV).

It belongs to the NhaA Na(+)/H(+) (TC 2.A.33) antiporter family.

The protein resides in the cell inner membrane. The enzyme catalyses Na(+)(in) + 2 H(+)(out) = Na(+)(out) + 2 H(+)(in). Functionally, na(+)/H(+) antiporter that extrudes sodium in exchange for external protons. This Flavobacterium psychrophilum (strain ATCC 49511 / DSM 21280 / CIP 103535 / JIP02/86) protein is Na(+)/H(+) antiporter NhaA.